Consider the following 82-residue polypeptide: Acyl carrier protein (82 aa).

One can recognise a Carrier domain in the interval 3 to 81 (SSEQEILAGL…DAVTYIAGAQ (79 aa)). O-(pantetheine 4'-phosphoryl)serine is present on Ser41.

Belongs to the acyl carrier protein (ACP) family. In terms of processing, 4'-phosphopantetheine is transferred from CoA to a specific serine of apo-ACP by AcpS. This modification is essential for activity because fatty acids are bound in thioester linkage to the sulfhydryl of the prosthetic group.

It localises to the cytoplasm. Its pathway is lipid metabolism; fatty acid biosynthesis. Its function is as follows. Carrier of the growing fatty acid chain in fatty acid biosynthesis. The polypeptide is Acyl carrier protein (Beutenbergia cavernae (strain ATCC BAA-8 / DSM 12333 / CCUG 43141 / JCM 11478 / NBRC 16432 / NCIMB 13614 / HKI 0122)).